We begin with the raw amino-acid sequence, 219 residues long: Ras-like protein 1 (219 aa).

15-22 (GDGGVGKS) contributes to the GTP binding site. Residues 37 to 45 (YDPTIEDSY) carry the Effector region motif. GTP-binding positions include 62 to 66 (DTAGQ) and 121 to 124 (NKCD). Cysteine methyl ester is present on Cys216. The S-farnesyl cysteine moiety is linked to residue Cys216. A propeptide spans 217-219 (VIC) (removed in mature form).

This sequence belongs to the small GTPase superfamily. Ras family. As to quaternary structure, scd1, scd2, cdc42, and ras1, in its GTP-bound state, act cooperatively to form a protein complex. Post-translationally, palmitoylated by the erf2-erf4 complex.

It is found in the cell membrane. The enzyme catalyses GTP + H2O = GDP + phosphate + H(+). With respect to regulation, alternates between an inactive form bound to GDP and an active form bound to GTP. Activated by a guanine nucleotide-exchange factor (GEF) and inactivated by a GTPase-activating protein (GAP). Its function is as follows. Participates in the process of sexual differentiation and the determination of cell shape. Essential for mating and for recognition of the mating pheromone, but not for vegetative growth. Does not regulate the intracellular cAMP level. Regulates two downstream pathways, namely the byr2/byr1/spk1 mitogen-activated protein kinase cascade and the cdc42 small G protein pathway. The former is relevant to mating and sporulation, whereas the latter is relevant to mating, cell growth and cell morphology. In Schizosaccharomyces pombe (strain 972 / ATCC 24843) (Fission yeast), this protein is Ras-like protein 1 (ras1).